A 342-amino-acid polypeptide reads, in one-letter code: Cyclin-D3-1 (342 aa).

The span at Val-322 to Ser-334 shows a compositional bias: polar residues. Residues Val-322–Arg-342 form a disordered region.

This sequence belongs to the cyclin family. Cyclin D subfamily.

In Oryza sativa subsp. japonica (Rice), this protein is Cyclin-D3-1 (CYCD3-1).